Reading from the N-terminus, the 340-residue chain is tRNA N6-adenosine threonylcarbamoyltransferase (340 aa).

Residues histidine 111 and histidine 115 each coordinate Fe cation. Residues 133-137 (VVSGG), aspartate 166, glycine 179, aspartate 183, and asparagine 272 each bind substrate. A Fe cation-binding site is contributed by aspartate 300.

It belongs to the KAE1 / TsaD family. Fe(2+) is required as a cofactor.

The protein localises to the cytoplasm. It catalyses the reaction L-threonylcarbamoyladenylate + adenosine(37) in tRNA = N(6)-L-threonylcarbamoyladenosine(37) in tRNA + AMP + H(+). Its function is as follows. Required for the formation of a threonylcarbamoyl group on adenosine at position 37 (t(6)A37) in tRNAs that read codons beginning with adenine. Is involved in the transfer of the threonylcarbamoyl moiety of threonylcarbamoyl-AMP (TC-AMP) to the N6 group of A37, together with TsaE and TsaB. TsaD likely plays a direct catalytic role in this reaction. The protein is tRNA N6-adenosine threonylcarbamoyltransferase of Geobacter sulfurreducens (strain ATCC 51573 / DSM 12127 / PCA).